Consider the following 750-residue polypeptide: Circadian input-output histidine kinase CikA (750 aa).

The interval 1 to 173 (MLPAFSPIFR…QVIAQIRQSL (173 aa)) is N-terminal domain. The GAF domain stretch occupies residues 174 to 333 (DLSEILNNAV…KNFLGQIGEH (160 aa)). The region spanning 385 to 609 (NISHELRTPL…IFTTVIPQQN (225 aa)) is the Histidine kinase domain. His388 carries the phosphohistidine; by autocatalysis modification. The interval 604-750 (VIPQQNFPPT…VQSIQQEPLR (147 aa)) is psR domain, bind KaiB(fs). One can recognise a Response regulatory domain in the interval 631–745 (SVIVIEQDEE…LLLQRVQSIQ (115 aa)). At Asp680 the chain carries 4-aspartylphosphate.

This sequence in the N-terminal section; belongs to the phytochrome family. In terms of assembly, homodimer. Part of the circadian clock (KaiA, KaiB, KaiC, CikA, RpaA, SasA), the composition of which varies during the circadian cycle. KaiA and CikA compete for binding to KaiB(fs). Interacts with RpaA.

It catalyses the reaction ATP + protein L-histidine = ADP + protein N-phospho-L-histidine.. Its function is as follows. Functions in an input pathway to the Kai circadian clock. Senses oxidized quinones via its C-terminal pseudo-receiver domain, providing a link between cell metabolism and the clock. Affects the ratio of phosphorylated to unphosphorylated KaiC, binds quinones via its pseudo-receptor domain. Quinone-binding destabilizes the protein rapidly. Autophosphorylates, does not transfer the phosphate to its pseudo-receiver (PsR) domain. May play a role in cell division. Functionally, also functions in a two-component CikA/RpaA output pathway from the circadian clock, negatively regulating kaiBC expression independently of labA and of sasA. One of three clock output pathways. Dephosphorylates phospho-RpaA, enhanced by KaiB and KaiC, has only modest kinase activity on RpaA. The polypeptide is Circadian input-output histidine kinase CikA (Synechocystis sp. (strain ATCC 27184 / PCC 6803 / Kazusa)).